A 584-amino-acid chain; its full sequence is DNA mismatch repair protein MutL (584 aa).

Belongs to the DNA mismatch repair MutL/HexB family.

Its function is as follows. This protein is involved in the repair of mismatches in DNA. It is required for dam-dependent methyl-directed DNA mismatch repair. May act as a 'molecular matchmaker', a protein that promotes the formation of a stable complex between two or more DNA-binding proteins in an ATP-dependent manner without itself being part of a final effector complex. The polypeptide is DNA mismatch repair protein MutL (Buchnera aphidicola subsp. Acyrthosiphon pisum (strain Tuc7)).